Reading from the N-terminus, the 186-residue chain is Nuclear transcription factor Y subunit B-1 (186 aa).

A disordered region spans residues 1 to 24; it reads MAGNKKRGGRNMDQVKKAAVRSDG. A DNA-binding region spans residues 34-40; the sequence is LPMANLV. The subunit association domain (SAD) stretch occupies residues 61–72; that stretch reads THDCAVEFVGFV. Positions 123-142 are disordered; that stretch reads GGNRRVAPPPPAAATPLTPG.

The protein belongs to the NFYB/HAP3 subunit family. In terms of assembly, heterotrimeric transcription factor composed of three components, NF-YA, NF-YB and NF-YC. NF-YB and NF-YC must interact and dimerize for NF-YA association and DNA binding. Interacts with MADS18. Forms a ternary complex with the MADS6-MADS18 heterodimer. As to expression, expressed in developing kernels.

It localises to the nucleus. In terms of biological role, component of the NF-Y/HAP transcription factor complex. The NF-Y complex stimulates the transcription of various genes by recognizing and binding to a CCAAT motif in promoters. May act through association with MADS-box proteins. May regulate the expression of genes involved in flowering. The chain is Nuclear transcription factor Y subunit B-1 (NFYB1) from Oryza sativa subsp. japonica (Rice).